Here is a 412-residue protein sequence, read N- to C-terminus: Imidazolonepropionase (412 aa).

Residues His-76 and His-78 each contribute to the Fe(3+) site. Positions 76 and 78 each coordinate Zn(2+). Residues Arg-85, Tyr-148, and His-181 each contribute to the 4-imidazolone-5-propanoate site. N-formimidoyl-L-glutamate is bound at residue Tyr-148. Residue His-242 coordinates Fe(3+). Residue His-242 participates in Zn(2+) binding. Residue Glu-245 participates in 4-imidazolone-5-propanoate binding. Asp-317 contacts Fe(3+). Asp-317 is a binding site for Zn(2+). N-formimidoyl-L-glutamate contacts are provided by Asn-319 and Gly-321. Residue Ser-322 coordinates 4-imidazolone-5-propanoate.

The protein belongs to the metallo-dependent hydrolases superfamily. HutI family. Zn(2+) is required as a cofactor. Requires Fe(3+) as cofactor.

The protein resides in the cytoplasm. The enzyme catalyses 4-imidazolone-5-propanoate + H2O = N-formimidoyl-L-glutamate. It functions in the pathway amino-acid degradation; L-histidine degradation into L-glutamate; N-formimidoyl-L-glutamate from L-histidine: step 3/3. In terms of biological role, catalyzes the hydrolytic cleavage of the carbon-nitrogen bond in imidazolone-5-propanoate to yield N-formimidoyl-L-glutamate. It is the third step in the universal histidine degradation pathway. This Staphylococcus aureus (strain MSSA476) protein is Imidazolonepropionase.